We begin with the raw amino-acid sequence, 377 residues long: MKIDYYEALGVTRTADDKTLKAAFRKLAMQYHPDRNPDDPEAERKFKEIGEAYETLKDPQKRAAYDRFGHAAFENGGMGGGFGNGFGGAGGFADIFEDIFGEMMGGGRRRSNGGRERGADLRYNMEVTLEEAYAGKTAQIRVPTSITCDECSGSGAKPGSQPTTCTMCSGSGRVRAAQGFFSVERTCPGCNGRGQIIKDPCEKCHGQGRVTQERSLSVNIPTGIEDGTRIRLAGEGEAGLRGGPAGDLYIFLSVKPHEFFQRDGADLYCKVPISMTTAALGGQFEVSTLDGTQTRVKVPEGTQNGKQFRLKGKGMPVLRQSVTGDLYIQIDIETPQNLSKRQRELLEEFEKLSSQENSPKSAGFFSRMKEFFEGIGE.

Residues 4-69 form the J domain; the sequence is DYYEALGVTR…QKRAAYDRFG (66 aa). The CR-type zinc finger occupies 135–213; sequence GKTAQIRVPT…CHGQGRVTQE (79 aa). 8 residues coordinate Zn(2+): Cys148, Cys151, Cys165, Cys168, Cys187, Cys190, Cys201, and Cys204. CXXCXGXG motif repeat units lie at residues 148–155, 165–172, 187–194, and 201–208; these read CDECSGSG, CTMCSGSG, CPGCNGRG, and CEKCHGQG.

It belongs to the DnaJ family. In terms of assembly, homodimer. Zn(2+) is required as a cofactor.

Its subcellular location is the cytoplasm. Its function is as follows. Participates actively in the response to hyperosmotic and heat shock by preventing the aggregation of stress-denatured proteins and by disaggregating proteins, also in an autonomous, DnaK-independent fashion. Unfolded proteins bind initially to DnaJ; upon interaction with the DnaJ-bound protein, DnaK hydrolyzes its bound ATP, resulting in the formation of a stable complex. GrpE releases ADP from DnaK; ATP binding to DnaK triggers the release of the substrate protein, thus completing the reaction cycle. Several rounds of ATP-dependent interactions between DnaJ, DnaK and GrpE are required for fully efficient folding. Also involved, together with DnaK and GrpE, in the DNA replication of plasmids through activation of initiation proteins. The chain is Chaperone protein DnaJ from Brucella abortus (strain S19).